We begin with the raw amino-acid sequence, 396 residues long: MSHPPTILRKTHPLLSLGNSMLVDLPSPANISAWWNFGSLLSLCLILQIITGLILAMHYTANTELAFSSVMHICRDVNNGWLMRNLHANGASMFFICIYAHIGRGIYYGSYLYKETWNVGVILFALTAATAFVGYVLPWGQMSFWGATVITNLISAVPYVGDDIVMWLWGGFSVSNATLTRFFTFHFILPFILAAMTMIHIMFLHQTGSSNPLGINSNLDKIQFHPYFSFKDIFGFVILLGVLFMISLLPPNALCEPDNFIYANPLSTPPHIKPEWYFLFAYAILRSIPNKLGGVMALAAAIMILLVIPFTHTSKQRGIQFRPLAQVTFWILIADLALLTWLGGEPAEHPFILMTQIASTVYFMIFILIFPILGRLENKLILLSKNTGKFNWNLTY.

Helical transmembrane passes span 37 to 57, 81 to 102, 117 to 137, and 182 to 202; these read FGSL…ILAM, WLMR…YAHI, WNVG…GYVL, and FFTF…IHIM. Heme b-binding residues include His-87 and His-101. Residues His-186 and His-200 each contribute to the heme b site. His-205 is an a ubiquinone binding site. The next 4 helical transmembrane spans lie at 230–250, 292–312, 324–344, and 351–371; these read FKDI…SLLP, LGGV…PFTH, LAQV…WLGG, and FILM…LIFP.

Belongs to the cytochrome b family. As to quaternary structure, the cytochrome bc1 complex contains 3 respiratory subunits (MT-CYB, CYC1 and UQCRFS1), 2 core proteins (UQCRC1 and UQCRC2) and probably 6 low-molecular weight proteins. The cofactor is heme b.

Its subcellular location is the mitochondrion inner membrane. Functionally, component of the ubiquinol-cytochrome c reductase complex (complex III or cytochrome b-c1 complex) that is part of the mitochondrial respiratory chain. The b-c1 complex mediates electron transfer from ubiquinol to cytochrome c. Contributes to the generation of a proton gradient across the mitochondrial membrane that is then used for ATP synthesis. The sequence is that of Cytochrome b (mt-cyb) from Lampetra fluviatilis (European river lamprey).